Reading from the N-terminus, the 467-residue chain is Cysteine--tRNA ligase (467 aa).

Cys27 contacts Zn(2+). Positions 29 to 39 match the 'HIGH' region motif; that stretch reads ATVQGLPHIGH. Zn(2+)-binding residues include Cys209, His234, and Glu238. The 'KMSKS' region motif lies at 265–269; it reads KMSKS. Lys268 serves as a coordination point for ATP.

This sequence belongs to the class-I aminoacyl-tRNA synthetase family. As to quaternary structure, monomer. Zn(2+) serves as cofactor.

Its subcellular location is the cytoplasm. It catalyses the reaction tRNA(Cys) + L-cysteine + ATP = L-cysteinyl-tRNA(Cys) + AMP + diphosphate. This Mycolicibacterium gilvum (strain PYR-GCK) (Mycobacterium gilvum (strain PYR-GCK)) protein is Cysteine--tRNA ligase.